Consider the following 526-residue polypeptide: GMP synthase [glutamine-hydrolyzing] (526 aa).

The Glutamine amidotransferase type-1 domain occupies 9 to 208 (RILILDFGSQ…VKDICGCECL (200 aa)). C86 acts as the Nucleophile in catalysis. Catalysis depends on residues H182 and E184. The GMPS ATP-PPase domain maps to 209 to 401 (WTPATIIDDA…LGLPYDMLYR (193 aa)). 236–242 (SGGVDSS) contributes to the ATP binding site.

In terms of assembly, homodimer.

The catalysed reaction is XMP + L-glutamine + ATP + H2O = GMP + L-glutamate + AMP + diphosphate + 2 H(+). It participates in purine metabolism; GMP biosynthesis; GMP from XMP (L-Gln route): step 1/1. In terms of biological role, catalyzes the synthesis of GMP from XMP. This chain is GMP synthase [glutamine-hydrolyzing], found in Aeromonas salmonicida (strain A449).